Here is a 2280-residue protein sequence, read N- to C-terminus: Genome polyprotein (2280 aa).

Positions 454–608 constitute an SF3 helicase domain; it reads ETQANNIRST…EEWKKRNPGK (155 aa). An ATP-binding site is contributed by 480–487; the sequence is GAPGIGKT. At tyrosine 965 the chain carries O-(5'-phospho-RNA)-tyrosine. The Peptidase C24 domain maps to 1054–1202; sequence GPTAIVEFTQ…TKVAQRVVKE (149 aa). Active-site for 3CLpro activity residues include histidine 1084, glutamate 1105, and cysteine 1169. Positions 1442-1567 constitute a RdRp catalytic domain; the sequence is GVLYCLDYSK…SVCPATASIF (126 aa). Positions 1722–1746 are disordered; sequence GNGSNPEPKQSNNPMVVDPPGTTGP. The segment covering 1723 to 1735 has biased composition (polar residues); it reads NGSNPEPKQSNNP.

As to quaternary structure, homodimer. Homomultimer. Specific enzymatic cleavages in vivo yield mature proteins. Pro-Pol is first autocatalytically cleaved, then processes the whole polyprotein. In terms of processing, VPg is uridylylated by the polymerase and is covalently attached to the 5'-end of the polyadenylated genomic and subgenomic RNAs. This uridylylated form acts as a nucleotide-peptide primer for the polymerase.

The protein resides in the virion. The protein localises to the host cytoplasm. The catalysed reaction is a ribonucleoside 5'-triphosphate + H2O = a ribonucleoside 5'-diphosphate + phosphate + H(+). It catalyses the reaction RNA(n) + a ribonucleoside 5'-triphosphate = RNA(n+1) + diphosphate. It carries out the reaction Endopeptidase with a preference for cleavage when the P1 position is occupied by Glu-|-Xaa and the P1' position is occupied by Gly-|-Yaa.. In terms of biological role, together with NTPase and NS4, initiates the formation of the replication complex. Induces the proliferation of the host smooth ER membranes forming long tubular structures. These remodeled membranes probably form the viral factories that contain the replication complex. Functionally, displays NTPase activity, but no helicase activity. Induces the formation of convoluted membranes derived from the host ER. These remodeled membranes probably form the viral factories that contain the replication complex. Together with NS2 and NS4, initiates the formation of the replication complex. Probable key protein responsible for the formation of membrane alterations by the virus. Induces the formation of convoluted membranes derived from the host ER. These remodeled membranes probably form the viral factories that contain the replication complex. Together with NS2 and NTPase, initiates the formation of the replication complex. Its function is as follows. Viral genome-linked protein is covalently linked to the 5'-end of the positive-strand, negative-strand genomic RNAs and subgenomic RNA. Acts as a genome-linked replication primer. May recruit ribosome to viral RNA thereby promoting viral proteins translation. Interacts with host translation initiation complex to allow the translation of viral proteins. In terms of biological role, protease-polymerase p76 processes the polyprotein: Pro-Pol is first released by autocleavage, then all other proteins are cleaved. Cleaves host translation initiation factor eIF4G1, eIF4G2 and PABP1 thereby inducing a shutdown of host protein synthesis. This shutdown may not prevent viral mRNA from being translated since viral Vpg replaces the cap. It is also an RNA-directed RNA polymerase which replicates genomic and antigenomic viral RNA by recognizing specific signals. Also transcribes a subgenomic mRNA by initiating RNA synthesis internally on antigenomic RNA. This sgRNA codes for structural proteins. Catalyzes the covalent attachment VPg with viral RNAs. Functionally, capsid protein self assembles to form an icosahedral capsid with a T=3 symmetry, about 38 nm in diameter, and consisting of 180 capsid proteins. The capsid encapsulate the genomic RNA and VP2 proteins. Attaches virion to target cells, inducing endocytosis of the viral particle. Acidification of the endosome induces conformational change of capsid protein thereby injecting virus genomic RNA into host cytoplasm. The chain is Genome polyprotein from Homo sapiens (Human).